The following is a 418-amino-acid chain: Tyrosine--tRNA ligase (418 aa).

L-tyrosine is bound at residue Tyr-35. The 'HIGH' region signature appears at 40 to 49; sequence PTAKSLHIGH. L-tyrosine contacts are provided by Tyr-168 and Gln-172. Positions 228-232 match the 'KMSKS' region motif; that stretch reads KYGKT. Lys-231 serves as a coordination point for ATP. An S4 RNA-binding domain is found at 352–410; it reads PTVVGAMVAAGVVDTKSGGRRAVAEGGAYLNNVKVADPDQRLTDDDFLCGRVALVRRGK.

This sequence belongs to the class-I aminoacyl-tRNA synthetase family. TyrS type 1 subfamily. In terms of assembly, homodimer.

The protein localises to the cytoplasm. The enzyme catalyses tRNA(Tyr) + L-tyrosine + ATP = L-tyrosyl-tRNA(Tyr) + AMP + diphosphate + H(+). Functionally, catalyzes the attachment of tyrosine to tRNA(Tyr) in a two-step reaction: tyrosine is first activated by ATP to form Tyr-AMP and then transferred to the acceptor end of tRNA(Tyr). This Cutibacterium acnes (strain DSM 16379 / KPA171202) (Propionibacterium acnes) protein is Tyrosine--tRNA ligase.